The chain runs to 1782 residues: Signal-induced proliferation-associated 1-like protein 1 (1782 aa).

Disordered stretches follow at residues 1-28, 47-125, and 140-171; these read MTSLKRSQTERPVTADRASVVSTDGAPK, GSSV…VSLN, and KNKTGPAESMDSRFLMPEAYPSSPRKALRRIR. The span at 84–94 shows a compositional bias: basic and acidic residues; sequence PPRKENVKESS. Positions 95–125 are enriched in low complexity; it reads RSSQEIETSSCLESLSSKGSPVSQGSSVSLN. Ser-162, Ser-187, Ser-193, Ser-208, Ser-255, and Ser-288 each carry phosphoserine. A disordered region spans residues 277 to 297; that stretch reads EREKPLKRRSKSETGDSSIFR. The Rap-GAP domain maps to 599–816; it reads LMKLDEQGLN…RTRQEYLKDL (218 aa). The PDZ domain maps to 953-1031; sequence EMTLRRNGLG…VVIIPPHDDC (79 aa). 2 disordered regions span residues 1069-1128 and 1144-1213; these read QRNA…RLSP and SQCR…SLAD. Ser-1078, Ser-1087, Ser-1116, Ser-1127, Ser-1149, Ser-1170, and Ser-1181 each carry phosphoserine. Residues 1080–1093 are compositionally biased toward polar residues; sequence QVPSQLQSPMTSRL. Residues 1149-1159 show a composition bias toward low complexity; that stretch reads SPSNLSSSSET. Residues 1186–1205 are compositionally biased toward polar residues; sequence DRQNTQSDISGSGKSTPSWQ. A phosphoserine mark is found at Ser-1234 and Ser-1249. Positions 1247 to 1285 are disordered; it reads HLSPNKQGHSDSHYSSHSSSNTLSSNASSAHSDEKWYDG. The segment covering 1261-1276 has biased composition (low complexity); sequence SSHSSSNTLSSNASSA. A Phosphoserine; by PLK2 modification is found at Ser-1305. Residues 1307–1342 form a disordered region; sequence IDTASYGPSHGSTASLGASTSSPRSGPGKEKVAPLW. Thr-1309 is modified (phosphothreonine; by PLK2). Over residues 1315–1328 the composition is skewed to low complexity; that stretch reads SHGSTASLGASTSS. Position 1328 is a phosphoserine; by CDK5 (Ser-1328). Ser-1345 carries the phosphoserine modification. Positions 1358–1368 are enriched in basic and acidic residues; that stretch reads TEGHGMDRKAE. Residues 1358-1454 are disordered; the sequence is TEGHGMDRKA…SSSGPRTFYP (97 aa). Residues Ser-1369, Ser-1370, Ser-1391, Ser-1410, and Ser-1412 each carry the phosphoserine modification. The segment covering 1378–1410 has biased composition (polar residues); sequence KSQGGSSPLSRENSTFSINDAASHTSTMSSRHS. Positions 1432–1447 are enriched in low complexity; it reads SSQLAPSFSSSSSSSS. 2 positions are modified to phosphoserine: Ser-1507 and Ser-1528. A Phosphothreonine modification is found at Thr-1530. Phosphoserine occurs at positions 1533, 1544, 1547, 1564, and 1567. Arg-1580 is subject to Asymmetric dimethylarginine. Residues Ser-1582, Ser-1624, Ser-1626, Ser-1629, Ser-1687, Ser-1690, Ser-1707, Ser-1708, and Ser-1712 each carry the phosphoserine modification. Residues 1625-1647 form a disordered region; that stretch reads ASDSSLTDIQETRRQPIPDPGLM. Residues 1713–1773 are a coiled coil; sequence PTLASKVDQL…ASDKLKKFTE (61 aa).

Interacts with DLG4, PDLIM5, PDLIM7 and LZTS3. Interacts with the actin cytoskeleton. Interacts (via PDZ domain) with EPHA4 (via PDZ motif); controls neuronal morphology through regulation of the RAP1 (RAP1A or RAP1B) and RAP2 (RAP2A, RAP2B or RAP2C) GTPases. Ubiquitinated and degraded by the SCF(BTRC) following phosphorylation by PLK2. In terms of processing, phosphorylated at Ser-1328 by CDK5, creating a docking site for the POLO box domains of PLK2. Subsequently, PLK2 binds and phosphorylates SIPA1L1, leading to ubiquitination and degradation by the proteasome.

Its subcellular location is the cytoplasm. It is found in the cytoskeleton. The protein resides in the postsynaptic density. The protein localises to the synapse. It localises to the synaptosome. In terms of biological role, stimulates the GTPase activity of RAP2A. Promotes reorganization of the actin cytoskeleton and recruits DLG4 to F-actin. Contributes to the regulation of dendritic spine morphogenesis. The sequence is that of Signal-induced proliferation-associated 1-like protein 1 (Sipa1l1) from Mus musculus (Mouse).